A 329-amino-acid polypeptide reads, in one-letter code: Stimulator of interferon genes protein (329 aa).

Over 1–4 (MACV) the chain is Cytoplasmic. A helical transmembrane segment spans residues 5–25 (LAIGSILFVWILGKGKYSGAQ). A topological domain (lumenal) is located at residue Leu26. Residues 27-52 (IYRMATNFAISQGCCLVTCACELTEE) form a helical membrane-spanning segment. Residues 53 to 74 (IKHLHTRYNGHYWRALKASFNL) lie on the Cytoplasmic side of the membrane. A helical transmembrane segment spans residues 75–88 (SCAAFVTAILCYVF). The Lumenal portion of the chain corresponds to 89-98 (YEPKLMASLP). Residues 99 to 116 (LTIDITLTLLSWLFCWIL) form a helical membrane-spanning segment. Residues 117-329 (GIQGPTPATI…QQHSEEYSML (213 aa)) lie on the Cytoplasmic side of the membrane. Residues 135-325 (LNVAHGLAWS…KHIRQQHSEE (191 aa)) are cyclic dinucleotide-binding domain (CBD). The 2',3'-cGAMP site is built by Ser144, Tyr149, Arg220, and Thr245. 3',3'-c-di-GMP-binding positions include Ser144, Tyr149, 220-223 (RVFK), and Thr245.

It belongs to the STING family. In terms of assembly, homodimer; forms a homodimer in absence of cyclic nucleotide (c-di-GMP or cGAMP). Homotetramer; in presence of cyclic nucleotide (c-di-GMP or cGAMP), forms tetramers and higher-order oligomers through side-by-side packing.

It is found in the endoplasmic reticulum membrane. The protein resides in the cytoplasm. Its subcellular location is the perinuclear region. It localises to the endoplasmic reticulum-Golgi intermediate compartment membrane. The protein localises to the golgi apparatus membrane. It is found in the cytoplasmic vesicle. The protein resides in the autophagosome membrane. It carries out the reaction H(+)(in) = H(+)(out). Sensor of cytosolic DNA from bacteria and viruses that promotes autophagy. Acts by recognizing and binding cyclic GMP-AMP (cGAMP), a messenger produced by CGAS in response to DNA in the cytosol. Exhibits guanine base-specific ligand recognition: binds 3'-3'linked cGAMP, 2'-3' linked cGAMP and 3'-3' linked c-di-GMP with much greater affinity as compared to 3'-3' linked c-di-AMP. Following cGAMP-binding, promotes the formation of autophagosomes, leading to target cytosolic DNA for degradation by the lysosome. Promotes autophagy by acting as a proton channel that directs proton efflux from the Golgi to facilitate LC3 lipidation. Lacks the C-terminal tail (CTT) found in other vertebrate orthologs which is essential for interferon signaling. The polypeptide is Stimulator of interferon genes protein (Xenopus tropicalis (Western clawed frog)).